A 130-amino-acid polypeptide reads, in one-letter code: MAATQYYGTGRRKTSTARVFAKVGTGNIIVNKLPLDEYFGRETSRMVVRQPLELVEMTEKLDIMVTVKGGGNTGQAGAIRHGITRALMELDESLRPSLRAAGFVTRDARKVERKKVGLRKARRKPQFSKR.

The protein belongs to the universal ribosomal protein uS9 family.

This is Small ribosomal subunit protein uS9 from Shewanella pealeana (strain ATCC 700345 / ANG-SQ1).